A 264-amino-acid chain; its full sequence is Thiazole synthase (264 aa).

The active-site Schiff-base intermediate with DXP is Lys-106. 1-deoxy-D-xylulose 5-phosphate is bound by residues Gly-167, 193–194 (AG), and 215–216 (NT).

The protein belongs to the ThiG family. In terms of assembly, homotetramer. Forms heterodimers with either ThiH or ThiS.

It is found in the cytoplasm. It catalyses the reaction [ThiS sulfur-carrier protein]-C-terminal-Gly-aminoethanethioate + 2-iminoacetate + 1-deoxy-D-xylulose 5-phosphate = [ThiS sulfur-carrier protein]-C-terminal Gly-Gly + 2-[(2R,5Z)-2-carboxy-4-methylthiazol-5(2H)-ylidene]ethyl phosphate + 2 H2O + H(+). It participates in cofactor biosynthesis; thiamine diphosphate biosynthesis. In terms of biological role, catalyzes the rearrangement of 1-deoxy-D-xylulose 5-phosphate (DXP) to produce the thiazole phosphate moiety of thiamine. Sulfur is provided by the thiocarboxylate moiety of the carrier protein ThiS. In vitro, sulfur can be provided by H(2)S. The protein is Thiazole synthase of Stenotrophomonas maltophilia (strain R551-3).